The following is a 346-amino-acid chain: MTDKTSLSYKDAGVDIDAGNALVDRIKGVVKKTRRPEVMGGLGGFGALCALPQKYREPILVSGTDGVGTKLRLAMDLKRHDAIGIDLVAMCVNDLVVSGAEPLFFLDYYATGKLDVDTAASVITGIAEGCSQSGCALVGGETAEMPGMYHGEDYDVAGFCVGVVEKSEIIDGSKVAEGDVLIALGSSGPHSNGYSLVRKILAFSNTDPETTQLEGKPLADHLLAPTRIYVKNILSLIEQVDVHAIAHLTGGGFWENIPRVLPDNTQAVLDESSWEWPAVFGWMQQAGNVSRFEMYRTFNCGVGMVIALSAADADKALRLMNDAGEKAWKIGVIKASDSEERVVINA.

Belongs to the AIR synthase family.

The protein localises to the cytoplasm. It catalyses the reaction 2-formamido-N(1)-(5-O-phospho-beta-D-ribosyl)acetamidine + ATP = 5-amino-1-(5-phospho-beta-D-ribosyl)imidazole + ADP + phosphate + H(+). It functions in the pathway purine metabolism; IMP biosynthesis via de novo pathway; 5-amino-1-(5-phospho-D-ribosyl)imidazole from N(2)-formyl-N(1)-(5-phospho-D-ribosyl)glycinamide: step 2/2. This Erwinia tasmaniensis (strain DSM 17950 / CFBP 7177 / CIP 109463 / NCPPB 4357 / Et1/99) protein is Phosphoribosylformylglycinamidine cyclo-ligase.